The chain runs to 618 residues: Grainyhead-like protein 1 homolog (618 aa).

The interval 1–91 (MTQEYDNKRP…EVEHPEPDHS (91 aa)) is transcription activation. Positions 74 to 92 (RRSSTAKPEVEHPEPDHSK) are enriched in basic and acidic residues. A disordered region spans residues 74-94 (RRSSTAKPEVEHPEPDHSKRN). At Thr-208 the chain carries Phosphothreonine. Residues 248-474 (SGNNFEYTLE…DLDTQPVLFI (227 aa)) enclose the Grh/CP2 DB domain. Interaction with DNA stretches follow at residues 380-389 (TDFSSQKGVK) and 427-430 (RKIR).

The protein belongs to the grh/CP2 family. Grainyhead subfamily. In terms of assembly, binds DNA as homodimer. Homodimer, also forms heterodimers with GRHL2 or GRHL3. Post-translationally, methylation at Arg-9 and Lys-116 may be involved in regulating transcriptional activation.

It is found in the nucleus. In terms of biological role, transcription factor involved in epithelial development. Binds directly to the consensus DNA sequence 5'-AACCGGTT-3'. Important regulator of DSG1 in the context of hair anchorage and epidermal differentiation, participates in the maintenance of the skin barrier. There is no genetic interaction with GRHL3, nor functional cooperativity due to diverse target gene selectivity during epithelia development. May play a role in regulating glucose homeostasis and insulin signaling. This Pongo abelii (Sumatran orangutan) protein is Grainyhead-like protein 1 homolog (GRHL1).